The primary structure comprises 3460 residues: Reelin (3460 aa).

The N-terminal stretch at 1-25 (MERSGWARQTFLLALLLGATLRARA) is a signal peptide. The Reelin domain occupies 26 to 190 (AAGYYPRFSP…GAPTDVTVHP (165 aa)). Cysteine 40 and cysteine 126 are disulfide-bonded. Residue asparagine 140 is glycosylated (N-linked (GlcNAc...) asparagine). Cysteines 154 and 178 form a disulfide. Asparagine 257, asparagine 289, and asparagine 305 each carry an N-linked (GlcNAc...) asparagine glycan. Cysteines 539 and 580 form a disulfide. Residues 592-603 (EFSTNHGRSWSL) form a BNR 1 repeat. A disulfide bond links cysteine 608 and cysteine 613. Asparagine 628 carries an N-linked (GlcNAc...) asparagine glycan. The 32-residue stretch at 670-701 (IGPSCLKFCSGRGQCTRHGCKCDPGFSGPACE) folds into the EGF-like 1 domain. 2 cysteine pairs are disulfide-bonded: cysteine 674/cysteine 684 and cysteine 691/cysteine 700. A BNR 2 repeat occupies 798 to 809 (HYSYDNGITWKL). An intrachain disulfide couples cysteine 894 to cysteine 936. Residues 951 to 962 (EYSTNHGLTWHL) form a BNR 3 repeat. 3 disulfide bridges follow: cysteine 967–cysteine 974, cysteine 1033–cysteine 1043, and cysteine 1050–cysteine 1059. In terms of domain architecture, EGF-like 2 spans 1029 to 1060 (IGQQCPNMCSGHGSCDHGICRCDQGYQGTECH). A BNR 4 repeat occupies 1156–1167 (QYSNNGGIQWHL). Asparagine 1266 carries N-linked (GlcNAc...) asparagine glycosylation. A disulfide bridge connects residues cysteine 1270 and cysteine 1309. A BNR 5 repeat occupies 1322–1333 (QYSHDAGMSWFL). Cysteine 1338 and cysteine 1347 are disulfide-bonded. The EGF-like 3 domain occupies 1408–1441 (ISEPCPSYCSGHGDCISGVCFCDLGYTAAQGTCV). The stretch at 1534–1545 (QYSNDNGILWHL) is one BNR 6 repeat. N-linked (GlcNAc...) asparagine glycosylation is present at asparagine 1599. Residues cysteine 1632 and cysteine 1672 are joined by a disulfide bond. Residues 1685-1696 (QYSLNNGKDWHL) form a BNR 7 repeat. Cysteine 1701 and cysteine 1708 are joined by a disulfide. An N-linked (GlcNAc...) asparagine glycan is attached at asparagine 1749. The region spanning 1764-1795 (LASGCPWMCSGRGICDAGRCVCDRGFGGPYCV) is the EGF-like 4 domain. A BNR 8 repeat occupies 1883–1894 (QFSISGGITWHL). An N-linked (GlcNAc...) asparagine glycan is attached at asparagine 1920. Residues 2042–2053 (EFSRDFGATWHL) form a BNR 9 repeat. Histidine 2060 and histidine 2073 together coordinate Zn(2+). Residues 2128-2160 (IGPQCEEMCNGQGSCINGTKCICDPGYSGPTCK) enclose the EGF-like 5 domain. 3 disulfides stabilise this stretch: cysteine 2132–cysteine 2142, cysteine 2136–cysteine 2148, and cysteine 2150–cysteine 2159. Residue asparagine 2144 is glycosylated (N-linked (GlcNAc...) asparagine). Glutamate 2178 is a binding site for Zn(2+). Cysteine 2194 and cysteine 2234 are oxidised to a cystine. The stretch at 2249-2260 (QYSLNGGLSWSL) is one BNR 10 repeat. Glutamate 2263 provides a ligand contact to Zn(2+). N-linked (GlcNAc...) asparagine glycosylation is found at asparagine 2268 and asparagine 2316. Cystine bridges form between cysteine 2347–cysteine 2386, cysteine 2392–cysteine 2558, and cysteine 2543–cysteine 2583. The Zn(2+) site is built by glutamate 2396, glutamate 2398, and histidine 2459. The stretch at 2398–2409 (EYSVDLGLSWHP) is one BNR 11 repeat. An EGF-like 6 domain is found at 2477–2508 (IGDGCIDMCSGHGRCIQGNCVCDEQWGGLYCD). N-linked (GlcNAc...) asparagine glycosylation occurs at asparagine 2568. 2 BNR repeats span residues 2597-2608 (EYSVNGGITWNL) and 2777-2788 (QYSTDFGVSWNY). Intrachain disulfides connect cysteine 2793–cysteine 2800, cysteine 2856–cysteine 2866, cysteine 2860–cysteine 2871, cysteine 2873–cysteine 2882, and cysteine 2918–cysteine 2965. The EGF-like 7 domain maps to 2852 to 2883 (LGPGCLDNCRGHGDCLREQCICDPGYSGPNCY). Asparagine 2961 is a glycosylation site (N-linked (GlcNAc...) asparagine). The BNR 14 repeat unit spans residues 2978–2989 (DYSTDGGITWTL). 2 N-linked (GlcNAc...) asparagine glycosylation sites follow: asparagine 3015 and asparagine 3072. One copy of the BNR 15 repeat lies at 3142–3154 (EYTKDARSDSWQL). A disulfide bridge links cysteine 3159 with cysteine 3169. The N-linked (GlcNAc...) asparagine glycan is linked to asparagine 3184. The EGF-like 8 domain maps to 3227 to 3259 (IGEACPKLCSGHGYCTTGAICICDESFQGDDCS). Disulfide bonds link cysteine 3231-cysteine 3241, cysteine 3235-cysteine 3247, cysteine 3249-cysteine 3258, and cysteine 3295-cysteine 3345. Residues 3362 to 3373 (QYSVNNGITWHV) form a BNR 16 repeat. 2 N-linked (GlcNAc...) asparagine glycosylation sites follow: asparagine 3411 and asparagine 3438.

It belongs to the reelin family. In terms of assembly, oligomer of disulfide-linked homodimers. Post-translationally, N-glycosylated and to a lesser extent also O-glycosylated. Abundantly produced during brain ontogenesis by the Cajal-Retzius cells and other pioneer neurons located in the telencephalic marginal zone and by granule cells of the external granular layer of the cerebellum. In adult brain, preferentially expressed in GABAergic interneurons of prefrontal cortices, temporal cortex, hippocampus and glutamatergic granule cells of cerebellum. Expression is reduced to about 50% in patients with schizophrenia. Also expressed in fetal and adult liver.

Its subcellular location is the secreted. It localises to the extracellular space. The protein resides in the extracellular matrix. In terms of biological role, extracellular matrix serine protease secreted by pioneer neurons that plays a role in layering of neurons in the cerebral cortex and cerebellum by coordinating cell positioning during neurodevelopment. Regulates microtubule function in neurons and neuronal migration. Binding to the extracellular domains of lipoprotein receptors VLDLR and LRP8/APOER2 induces tyrosine phosphorylation of DAB1 and modulation of TAU phosphorylation. Affects migration of sympathetic preganglionic neurons in the spinal cord, where it seems to act as a barrier to neuronal migration. Enzymatic activity is important for the modulation of cell adhesion. This is Reelin (RELN) from Homo sapiens (Human).